The chain runs to 344 residues: uncharacterized protein (344 aa).

6 helical membrane passes run 155–175 (IARITLAPLGMIFLVYSIFLV), 181–201 (WGLGGIIFFLGVYFMVKAYGW), 221–241 (LSFIFYVTSAILLIISIVNGF), 254–274 (ISSFIFYSTWWFVLSGIFALL), 291–311 (FTIIFLLIAFGLIVWASAAYV), and 319–339 (ALQNLAGAIVGAILIAAIGVF).

The protein to M.jannaschii MJ1032.

Its subcellular location is the cell membrane. This is an uncharacterized protein from Archaeoglobus fulgidus (strain ATCC 49558 / DSM 4304 / JCM 9628 / NBRC 100126 / VC-16).